The primary structure comprises 186 residues: Elongation factor P (186 aa).

The protein belongs to the elongation factor P family.

The protein resides in the cytoplasm. The protein operates within protein biosynthesis; polypeptide chain elongation. Functionally, involved in peptide bond synthesis. Stimulates efficient translation and peptide-bond synthesis on native or reconstituted 70S ribosomes in vitro. Probably functions indirectly by altering the affinity of the ribosome for aminoacyl-tRNA, thus increasing their reactivity as acceptors for peptidyl transferase. In Streptococcus mutans serotype c (strain ATCC 700610 / UA159), this protein is Elongation factor P.